Consider the following 401-residue polypeptide: Acetate kinase (401 aa).

Asparagine 7 contacts Mg(2+). Lysine 14 is a binding site for ATP. Residue arginine 96 participates in substrate binding. Aspartate 153 acts as the Proton donor/acceptor in catalysis. ATP contacts are provided by residues 212-216 (HLGNG), 287-289 (DMR), and 335-339 (GIGEN). Glutamate 388 provides a ligand contact to Mg(2+).

Belongs to the acetokinase family. In terms of assembly, homodimer. The cofactor is Mg(2+). Requires Mn(2+) as cofactor.

It is found in the cytoplasm. The catalysed reaction is acetate + ATP = acetyl phosphate + ADP. It participates in metabolic intermediate biosynthesis; acetyl-CoA biosynthesis; acetyl-CoA from acetate: step 1/2. Its function is as follows. Catalyzes the formation of acetyl phosphate from acetate and ATP. Can also catalyze the reverse reaction. In Microcystis aeruginosa (strain NIES-843 / IAM M-2473), this protein is Acetate kinase.